Reading from the N-terminus, the 863-residue chain is ATP-dependent helicase Lhr-Core protein 2 (863 aa).

ATP is bound by residues Phe-30, Gln-37, Lys-60, Thr-61, Asp-179, Glu-180, Arg-377, and His-380. The region spanning 41-234 (VIEIHKGENV…FVFGFNDDGT (194 aa)) is the Helicase ATP-binding domain. The short motif at 179-182 (DEVH) is the DEAH box element. The Helicase C-terminal domain maps to 275–424 (RLDELIEQHR…RIKIPQNPLD (150 aa)). The interval 418-512 (IPQNPLDVLV…AIYYMNTGTI (95 aa)) is WH domain. Positions 513–863 (PDEAKIEVYT…KIMAMIGELE (351 aa)) are domain 4.

Belongs to the Lhr helicase family. Lhr-Core subfamily. In terms of assembly, monomer.

The enzyme catalyses ATP + H2O = ADP + phosphate + H(+). With respect to regulation, unwinding of dsRNA duplexes is inhibited by AMP-PMP and ATP-gamma-S. A DNA:RNA helicase with a significant strand annealing activity, probably involved in DNA repair and RNA transactions. In vitro has a slow helicase activity with a preference for 3'-overhang duplexes; displaces RNA from 3'-overhang DNA:RNA or RNA:RNA duplexes. 3'-tailed double-stranded (ds)DNA is not unwound. The slow helicase activity on RNA duplexes is ATP-independent. Has strand annealing properties in the absence of ATP; forms 3'-overhang DNA:RNA, 3'-overhang dsRNA and 3'-overhang dsDNA duplexes but not 5'-overhang duplexes. A nucleic acid-dependent ATPase; single-stranded (ss)DNA and RNA are equally stimulatory. Binds ssDNA, RNA, dsDNA and dsRNA duplexes. The sequence is that of ATP-dependent helicase Lhr-Core protein 2 from Thermococcus barophilus (strain DSM 11836 / MP).